Reading from the N-terminus, the 973-residue chain is Mediator of RNA polymerase II transcription subunit 16 (973 aa).

The protein belongs to the Mediator complex subunit 16 family. As to quaternary structure, component of the Mediator complex.

It localises to the nucleus. Component of the Mediator complex, a coactivator involved in the regulated transcription of nearly all RNA polymerase II-dependent genes. Mediator functions as a bridge to convey information from gene-specific regulatory proteins to the basal RNA polymerase II transcription machinery. Mediator is recruited to promoters by direct interactions with regulatory proteins and serves as a scaffold for the assembly of a functional preinitiation complex with RNA polymerase II and the general transcription factors. The chain is Mediator of RNA polymerase II transcription subunit 16 (SIN4) from Candida glabrata (strain ATCC 2001 / BCRC 20586 / JCM 3761 / NBRC 0622 / NRRL Y-65 / CBS 138) (Yeast).